The following is a 378-amino-acid chain: Spermidine/putrescine import ATP-binding protein PotA (378 aa).

The ABC transporter domain maps to 18–248; it reads VLLSGISKSF…PKNLFVAGFI (231 aa). An ATP-binding site is contributed by 50-57; sequence GPSGCGKT.

This sequence belongs to the ABC transporter superfamily. Spermidine/putrescine importer (TC 3.A.1.11.1) family. The complex is composed of two ATP-binding proteins (PotA), two transmembrane proteins (PotB and PotC) and a solute-binding protein (PotD).

The protein localises to the cell inner membrane. It catalyses the reaction ATP + H2O + polyamine-[polyamine-binding protein]Side 1 = ADP + phosphate + polyamineSide 2 + [polyamine-binding protein]Side 1.. In terms of biological role, part of the ABC transporter complex PotABCD involved in spermidine/putrescine import. Responsible for energy coupling to the transport system. The chain is Spermidine/putrescine import ATP-binding protein PotA from Salmonella choleraesuis (strain SC-B67).